A 162-amino-acid chain; its full sequence is Endoribonuclease YbeY (162 aa).

Zn(2+) is bound by residues His-117, His-121, and His-127.

The protein belongs to the endoribonuclease YbeY family. It depends on Zn(2+) as a cofactor.

Its subcellular location is the cytoplasm. Its function is as follows. Single strand-specific metallo-endoribonuclease involved in late-stage 70S ribosome quality control and in maturation of the 3' terminus of the 16S rRNA. The polypeptide is Endoribonuclease YbeY (Francisella tularensis subsp. holarctica (strain OSU18)).